A 194-amino-acid polypeptide reads, in one-letter code: Archaetidylinositol phosphate synthase (194 aa).

Helical transmembrane passes span I32–I51 and L58–G78. Residues D67, D70, D88, and D92 each coordinate Mg(2+). D92 acts as the Proton acceptor in catalysis. 3 helical membrane-spanning segments follow: residues L103–V123, I150–A170, and A172–L192.

The protein belongs to the CDP-alcohol phosphatidyltransferase class-I family. It depends on Mn(2+) as a cofactor. Mg(2+) is required as a cofactor.

The protein localises to the cell membrane. It catalyses the reaction CDP-2,3-bis-O-(phytanyl)-sn-glycerol + 1D-myo-inositol 3-phosphate = saturated 1-archaetidyl-1D-myo-inositol 3-phosphate + CMP + H(+). It participates in lipid metabolism; phospholipid metabolism. Functionally, catalyzes the formation of archaetidylinositol phosphate (AIP) from CDP-archaeol (CDP-ArOH or CDP-2,3-bis-(O-phytanyl)-sn-glycerol) and 1L-myo-inositol 1-phosphate (IP or 1D-myo-inositol 3-phosphate). AIP is a precursor of archaetidyl-myo-inositol (AI), an ether-type inositol phospholipid ubiquitously distributed in archaea membranes and essential for glycolipid biosynthesis in archaea. The sequence is that of Archaetidylinositol phosphate synthase from Aeropyrum pernix (strain ATCC 700893 / DSM 11879 / JCM 9820 / NBRC 100138 / K1).